We begin with the raw amino-acid sequence, 319 residues long: Acetyl esterase (319 aa).

Positions H91 to G93 match the Involved in the stabilization of the negatively charged intermediate by the formation of the oxyanion hole motif. Residues S165, D262, and H292 contribute to the active site.

Belongs to the 'GDXG' lipolytic enzyme family. As to quaternary structure, homodimer. Interacts with MalT and MelA.

It is found in the cytoplasm. Its function is as follows. Displays esterase activity towards short chain fatty esters (acyl chain length of up to 8 carbons). Able to hydrolyze triacetylglycerol (triacetin) and tributyrylglycerol (tributyrin), but not trioleylglycerol (triolein) or cholesterol oleate. Negatively regulates MalT activity by antagonizing maltotriose binding. Inhibits MelA galactosidase activity. The chain is Acetyl esterase from Shigella flexneri.